Reading from the N-terminus, the 262-residue chain is Small ribosomal subunit protein eS4 (262 aa).

In terms of domain architecture, S4 RNA-binding spans 42–105 (LPLIIMLRNR…GEFFRLLYDV (64 aa)).

The protein belongs to the eukaryotic ribosomal protein eS4 family.

This Ixodes scapularis (Black-legged tick) protein is Small ribosomal subunit protein eS4 (RpS4).